The following is a 440-amino-acid chain: MKKLLLAASIVYFASACLAEEKTTPFLSNSDTKIKLEGFYLFESGYIKQNHLILFDKNVTDNRKKLGFYTEVAFAATITKTINDVIAGAKIVLQPTTKAKTAASYNGSHIFIETSYGKVELGSPVDASAKLRVTGNKVTAGTGGWYRYALLDGQYMRYNGLKPDFDTNVNFYLESYSNSFDQINEKTEKARRLNFFTPKMKGFQAGISYTPDTANTGGNKNINNLTLQSSGRNGISVSRTGIKTFALGNGETMTINQNIRDAFSAGLTYEHAISEDADLKLSMTGEYGKPARRLIHSKVDGTTKTIEVLNTYKLSNLKAYNLGAVFTYGNFSCGASYSNLGKSLTSKEYYKVGRNTYYYNGAVAYGQGPIKTSLAYLKASRYKNTVNAVSLATEYKIMPGLLPYAEISHFQAKGKPVYYPEAPSKTTRGTVGLIGTKLKF.

The first 19 residues, 1–19 (MKKLLLAASIVYFASACLA), serve as a signal peptide directing secretion.

This is an uncharacterized protein from Rickettsia prowazekii (strain Madrid E).